The chain runs to 65 residues: MTDEKCVRCGGDQLVEGAVVWNAPLRFKREGAGHFNRGTQVNAVACETCGHIDLYLESRARGSTK.

This is an uncharacterized protein from Mycobacterium tuberculosis (strain ATCC 25618 / H37Rv).